We begin with the raw amino-acid sequence, 172 residues long: Austinoid biosynthesis clusters protein J (172 aa).

Belongs to the trt14 isomerase family. In terms of assembly, homodimer.

Its pathway is secondary metabolite biosynthesis; terpenoid biosynthesis. Its function is as follows. Part of the gene cluster B that mediates the biosynthesis of the fungal meroterpenoid acetoxydehydroaustin. The first step of the pathway is the synthesis of 3,5-dimethylorsellinic acid by the polyketide synthase ausA. 3,5-dimethylorsellinic acid is then prenylated by the polyprenyl transferase ausN. Further epoxidation by the FAD-dependent monooxygenase ausM and cyclization by the probable terpene cyclase ausL lead to the formation of protoaustinoid A. Protoaustinoid A is then oxidized to spiro-lactone preaustinoid A3 by the combined action of the FAD-binding monooxygenases ausB and ausC, and the dioxygenase ausE. Acid-catalyzed keto-rearrangement and ring contraction of the tetraketide portion of preaustinoid A3 by ausJ lead to the formation of preaustinoid A4. The aldo-keto reductase ausK, with the help of ausH, is involved in the next step by transforming preaustinoid A4 into isoaustinone which is in turn hydroxylated by the P450 monooxygenase ausI to form austinolide. The cytochrome P450 monooxygenase ausG then modifies austinolide to austinol. Austinol is further acetylated to austin by the O-acetyltransferase ausP, which spontaneously changes to dehydroaustin. The cytochrome P450 monooxygenase then converts dehydroaustin is into 7-dehydrodehydroaustin. The hydroxylation catalyzed by ausR permits the second O-acetyltransferase ausQ to add an additional acetyl group to the molecule, leading to the formation of acetoxydehydroaustin. Due to genetic rearrangements of the clusters and the subsequent loss of some enzymes, the end product of the Penicillium brasilianum austinoid biosynthesis clusters is acetoxydehydroaustin. The chain is Austinoid biosynthesis clusters protein J from Penicillium brasilianum.